A 1294-amino-acid polypeptide reads, in one-letter code: MAKVRAALDRITDPSVKAVLNEEAYSHIRPVLRESLTNNPYAIAPDAADTLEKYGIATNPFAVKVHSHGAVKSIENTLLERVGFNLPKEPCIFLFLKRSKLRYLRRGPSNKDIFINLAIEPRDLQRYEEDTLVESWTRITTRYAYISDTLHFFTRKMLADLFFHNPALDVLYATLVLPPEALHKHPSIEPDLYTINYNFNGFQYIPGNHGGGSYSHEFKQLEWLKVGHLKSPELSLTFQMIESIGANHLFMITRGIKITPRVRTFTKDSYVLFPQIFHPRNLNPSKPFPKVKAMQLFTYVKSVKNPTERDIYAKIRQLIKTSELSDYHPDEIVHIVNYFVFISKLDSINSYSDILSLPIWSKALLPIKTKITQLWEKLTGARAFNQLLDALQWKTFTYSLEVVDFSTAPSQRDCFMEDERLETDTLEDEVSQNANNNKPTSLQNIEEAVKNNPDLPWAPWLLILQAHNADCTQKQYDPENNLILPIQEINTLPKHQHPDIPTDLLTLLTKLHREPTTVPLDNHRARAYGSDVKNLRIGALLKKQSKDWLASFALKTENIERQVLMSVIHGAGGSGKSHAIQTWMRSLNRRDRHVTIILPTTDLRNDWTTKVPNLEQANFKTFEKALCQPCGKIIVFDDYSKLPQGYIEAFLAINQNVILAILTGDSKQSFHHESNEDAYTATLEPSINTYQPFCRYYLNITHRNKPDLANKLGVYSCSSGTTSFTMSSQALKGMPILSPSIMKKTALGEMGQKSMTYAGCQGLTTKAVQILLDTNTPLCSSNVIYTALSRAVDHIHFINTGPNSTDFWEKLDSTPYLKTFLDCVREERMNEIVAVEEPPAPVPAPTTHFPKVNPTTVIESYVHDLPEKHGREIFSETHGHSNAIQTDNPVVQLFPHQQAKDETLYWATIEARLQCTSSEENLKEFHLKHDIGDILFLNYKQAMNLPQDPIPFNPDLWTLCKQEIENTYLKKSAAALVNAATRQSPDFDSHAIALFLKSQWVKKTEKIGCLKIKAGQTIAAFMQQTVMIYGTMARYMRKFRNQYCPRKIFVNCETTPADFNSFILDEWNFNRTCFSNDFTAFDQSQDGSILQFEVIKAKFHNIPEDIIEGYIQIKTHAKIFLGTLSIMRLSGEGPTFDANTEANIAYTHTKFNIPCDAAQVYAGDDMSIDYVASVKPSFNMIEHLMKLKGKPVFNTQTQGDFAEFCGWTISPKGIIKKPEKMNMSIELQKNINKFHEVKRSYALDHAFAYQLGDELHELYNESEAEHHQLATRSLILAGQATALDILDYGLRDLK.

Residues 59-224 (NPFAVKVHSH…SHEFKQLEWL (166 aa)) form the Alphavirus-like MT domain. A (+)RNA virus helicase ATP-binding domain is found at 541–698 (LKKQSKDWLA…TYQPFCRYYL (158 aa)). 570 to 577 (GAGGSGKS) contacts ATP. In terms of domain architecture, (+)RNA virus helicase C-terminal spans 699-832 (NITHRNKPDL…CVREERMNEI (134 aa)). One can recognise a RdRp catalytic domain in the interval 1071–1178 (RTCFSNDFTA…DYVASVKPSF (108 aa)).

Belongs to the potexvirus/carlavirus RNA replication protein family.

It carries out the reaction RNA(n) + a ribonucleoside 5'-triphosphate = RNA(n+1) + diphosphate. The enzyme catalyses ATP + H2O = ADP + phosphate + H(+). RNA replication. The central part of this protein possibly functions as an ATP-binding helicase. This Trifolium (WCMV) protein is RNA replication protein.